A 332-amino-acid polypeptide reads, in one-letter code: Holliday junction branch migration complex subunit RuvB (332 aa).

The segment at M1–Y181 is large ATPase domain (RuvB-L). ATP is bound by residues L20, R21, G62, K65, T66, T67, E128 to F130, R171, Y181, and R218. Position 66 (T66) interacts with Mg(2+). The interval E182 to D252 is small ATPAse domain (RuvB-S). Positions H255 to K332 are head domain (RuvB-H). R291, R310, R312, and R315 together coordinate DNA.

It belongs to the RuvB family. Homohexamer. Forms an RuvA(8)-RuvB(12)-Holliday junction (HJ) complex. HJ DNA is sandwiched between 2 RuvA tetramers; dsDNA enters through RuvA and exits via RuvB. An RuvB hexamer assembles on each DNA strand where it exits the tetramer. Each RuvB hexamer is contacted by two RuvA subunits (via domain III) on 2 adjacent RuvB subunits; this complex drives branch migration. In the full resolvosome a probable DNA-RuvA(4)-RuvB(12)-RuvC(2) complex forms which resolves the HJ.

It is found in the cytoplasm. The catalysed reaction is ATP + H2O = ADP + phosphate + H(+). The RuvA-RuvB-RuvC complex processes Holliday junction (HJ) DNA during genetic recombination and DNA repair, while the RuvA-RuvB complex plays an important role in the rescue of blocked DNA replication forks via replication fork reversal (RFR). RuvA specifically binds to HJ cruciform DNA, conferring on it an open structure. The RuvB hexamer acts as an ATP-dependent pump, pulling dsDNA into and through the RuvAB complex. RuvB forms 2 homohexamers on either side of HJ DNA bound by 1 or 2 RuvA tetramers; 4 subunits per hexamer contact DNA at a time. Coordinated motions by a converter formed by DNA-disengaged RuvB subunits stimulates ATP hydrolysis and nucleotide exchange. Immobilization of the converter enables RuvB to convert the ATP-contained energy into a lever motion, pulling 2 nucleotides of DNA out of the RuvA tetramer per ATP hydrolyzed, thus driving DNA branch migration. The RuvB motors rotate together with the DNA substrate, which together with the progressing nucleotide cycle form the mechanistic basis for DNA recombination by continuous HJ branch migration. Branch migration allows RuvC to scan DNA until it finds its consensus sequence, where it cleaves and resolves cruciform DNA. This Streptococcus agalactiae serotype V (strain ATCC BAA-611 / 2603 V/R) protein is Holliday junction branch migration complex subunit RuvB.